The following is a 122-amino-acid chain: Large ribosomal subunit protein uL22 (122 aa).

The segment at 103 to 122 (VEGKEMKSSKSHKKNQAEGK) is disordered.

This sequence belongs to the universal ribosomal protein uL22 family. Part of the 50S ribosomal subunit.

In terms of biological role, this protein binds specifically to 23S rRNA; its binding is stimulated by other ribosomal proteins, e.g. L4, L17, and L20. It is important during the early stages of 50S assembly. It makes multiple contacts with different domains of the 23S rRNA in the assembled 50S subunit and ribosome. Functionally, the globular domain of the protein is located near the polypeptide exit tunnel on the outside of the subunit, while an extended beta-hairpin is found that lines the wall of the exit tunnel in the center of the 70S ribosome. The protein is Large ribosomal subunit protein uL22 of Helicobacter pylori (strain P12).